Reading from the N-terminus, the 522-residue chain is Non-structural maintenance of chromosome element 6 (522 aa).

Residues lysine 482–threonine 492 show a composition bias toward basic and acidic residues. A disordered region spans residues lysine 482 to arginine 522. The segment covering serine 504–arginine 522 has biased composition (basic residues).

Component of the smc5/smc6 complex which consists of two subcomplexes, smc5-smc6-nse2 and nse1-nse2-nse4. Interacts with nse5.

The protein resides in the nucleus. It localises to the chromosome. In terms of biological role, acts in a DNA repair pathway for removal of UV-induced DNA damage that is distinct from classical nucleotide excision repair and in repair of ionizing radiation damage. Functions in homologous recombination repair of DNA double strand breaks and in recovery of stalled replication forks. May prevent formation of excessive Holliday junctions or assist in their resolution. The sequence is that of Non-structural maintenance of chromosome element 6 (nse6) from Schizosaccharomyces pombe (strain 972 / ATCC 24843) (Fission yeast).